Reading from the N-terminus, the 287-residue chain is Ribosomal RNA small subunit methyltransferase I (287 aa).

Belongs to the methyltransferase superfamily. RsmI family.

The protein localises to the cytoplasm. It catalyses the reaction cytidine(1402) in 16S rRNA + S-adenosyl-L-methionine = 2'-O-methylcytidine(1402) in 16S rRNA + S-adenosyl-L-homocysteine + H(+). Catalyzes the 2'-O-methylation of the ribose of cytidine 1402 (C1402) in 16S rRNA. The polypeptide is Ribosomal RNA small subunit methyltransferase I (Streptococcus pyogenes serotype M1).